A 453-amino-acid chain; its full sequence is Lipase 9 (453 aa).

A signal peptide spans 1–14 (MLYLILFLIAPIYA). Residue N36 is glycosylated (N-linked (GlcNAc...) asparagine). The cysteines at positions 110 and 281 are disulfide-linked. The active-site Charge relay system is S194. Residues N229, N266, and N269 are each glycosylated (N-linked (GlcNAc...) asparagine). Residues D343 and H376 each act as charge relay system in the active site. An intrachain disulfide couples C359 to C404. N-linked (GlcNAc...) asparagine glycosylation is present at N417.

Belongs to the AB hydrolase superfamily. Lipase family. Class Lip subfamily.

Its subcellular location is the secreted. It carries out the reaction a triacylglycerol + H2O = a diacylglycerol + a fatty acid + H(+). Functionally, secreted lipase that is able to hydrolyze both the neutral triacylglycerols and the monopalmitate ester Tween 40, allowing the use of hydrolyzed products as carbon sources. Has broad lipolytic activity, which may be important for colonization and subsequent infection, therefore contributing to the persistence and virulence in human tissue. This Candida albicans (strain SC5314 / ATCC MYA-2876) (Yeast) protein is Lipase 9.